A 162-amino-acid chain; its full sequence is MRIGLYPGTFDPLTLGHLDIIQRAMALVDRLVIGVAINRDKGPLFSLEERVRMVESECRAIAANGGEIVVHPFENLLIDCARDVGASVILRGLRAVADFEYEFQMVGMNRALDAGIETVFLMADARRQAIASKLVKEIARLGGDVSSFVTPDVGAALMAKYR.

Residue Thr9 coordinates substrate. Residues 9–10 and His17 each bind ATP; that span reads TF. Substrate contacts are provided by Lys41, Leu77, and Arg91. ATP is bound by residues 92–94, Glu102, and 127–133; these read GLR and RQAIASK.

The protein belongs to the bacterial CoaD family. In terms of assembly, homohexamer. Mg(2+) is required as a cofactor.

It is found in the cytoplasm. The enzyme catalyses (R)-4'-phosphopantetheine + ATP + H(+) = 3'-dephospho-CoA + diphosphate. It functions in the pathway cofactor biosynthesis; coenzyme A biosynthesis; CoA from (R)-pantothenate: step 4/5. Functionally, reversibly transfers an adenylyl group from ATP to 4'-phosphopantetheine, yielding dephospho-CoA (dPCoA) and pyrophosphate. The protein is Phosphopantetheine adenylyltransferase of Cereibacter sphaeroides (strain ATCC 17025 / ATH 2.4.3) (Rhodobacter sphaeroides).